A 332-amino-acid chain; its full sequence is Putative potassium channel regulatory protein sup-10 (332 aa).

A signal peptide spans Met-1–Cys-18. Over Trp-19 to Ala-301 the chain is Extracellular. N-linked (GlcNAc...) asparagine glycosylation is found at Asn-61, Asn-107, and Asn-166. The helical transmembrane segment at Phe-302–Trp-322 threads the bilayer. Residues Gly-323–Asp-332 are Cytoplasmic-facing.

As to quaternary structure, may form a complex with sup-9 and unc-93 where sup-10 and unc-93 act as regulatory subunits of the two pore potassium channel sup-9. Sup-10 may regulate sup-9 via sup-18. In terms of tissue distribution, low levels in body-wall muscles, eight vulval muscles, intestinal muscles and anal depressor muscle.

It localises to the membrane. In terms of biological role, may contribute to coordination of muscle contraction as regulatory subunit of a nonessential potassium channel complex. The polypeptide is Putative potassium channel regulatory protein sup-10 (Caenorhabditis elegans).